Here is a 436-residue protein sequence, read N- to C-terminus: uncharacterized protein (436 aa).

The next 12 membrane-spanning stretches (helical) occupy residues 38 to 58 (ILIF…TVGA), 70 to 90 (VAGI…LLIG), 102 to 122 (LAGG…AALI), 125 to 145 (VALL…NLQV), 160 to 180 (TAAS…PNLV), 197 to 217 (GPFI…LIFL), 254 to 274 (IMVG…IMTM), 291 to 311 (LVIG…GLLV), 319 to 339 (MAIA…IAPA), 342 to 362 (LSLL…GLLT), 383 to 403 (FDVL…MVVA), and 409 to 429 (ILSI…IWYF).

The protein belongs to the major facilitator superfamily.

Its subcellular location is the cell membrane. This is an uncharacterized protein from Bacillus subtilis (strain 168).